The sequence spans 187 residues: Ribosome maturation factor RimM (187 aa).

The 84-residue stretch at 95 to 178 folds into the PRC barrel domain; it reads DEDEFFYADL…GLVEDKDESL (84 aa).

The protein belongs to the RimM family. Binds ribosomal protein uS19.

Its subcellular location is the cytoplasm. An accessory protein needed during the final step in the assembly of 30S ribosomal subunit, possibly for assembly of the head region. Essential for efficient processing of 16S rRNA. May be needed both before and after RbfA during the maturation of 16S rRNA. It has affinity for free ribosomal 30S subunits but not for 70S ribosomes. This Sinorhizobium fredii (strain NBRC 101917 / NGR234) protein is Ribosome maturation factor RimM.